A 210-amino-acid polypeptide reads, in one-letter code: Large ribosomal subunit protein uL4 (210 aa).

The span at glutamine 41–lysine 52 shows a compositional bias: polar residues. The segment at glutamine 41–glycine 71 is disordered. Residues glycine 60 to glycine 71 are compositionally biased toward basic residues.

The protein belongs to the universal ribosomal protein uL4 family. In terms of assembly, part of the 50S ribosomal subunit.

One of the primary rRNA binding proteins, this protein initially binds near the 5'-end of the 23S rRNA. It is important during the early stages of 50S assembly. It makes multiple contacts with different domains of the 23S rRNA in the assembled 50S subunit and ribosome. In terms of biological role, forms part of the polypeptide exit tunnel. The chain is Large ribosomal subunit protein uL4 from Trichormus variabilis (strain ATCC 29413 / PCC 7937) (Anabaena variabilis).